The following is a 313-amino-acid chain: GTPase Era (313 aa).

One can recognise an Era-type G domain in the interval 20-187 (RSGFVALIGA…MDYLAETLPE (168 aa)). Residues 28–35 (GATNAGKS) form a G1 region. Position 28–35 (28–35 (GATNAGKS)) interacts with GTP. The interval 54–58 (QTTRA) is G2. Positions 75-78 (DTPG) are G3. GTP contacts are provided by residues 75-79 (DTPGI) and 137-140 (NKVD). The tract at residues 137–140 (NKVD) is G4. A G5 region spans residues 166 to 168 (ISA). The 78-residue stretch at 218 to 295 (LHQELPYASH…HLFLFVKVRE (78 aa)) folds into the KH type-2 domain.

Belongs to the TRAFAC class TrmE-Era-EngA-EngB-Septin-like GTPase superfamily. Era GTPase family. Monomer.

Its subcellular location is the cytoplasm. It is found in the cell inner membrane. An essential GTPase that binds both GDP and GTP, with rapid nucleotide exchange. Plays a role in 16S rRNA processing and 30S ribosomal subunit biogenesis and possibly also in cell cycle regulation and energy metabolism. This Rhizobium meliloti (strain 1021) (Ensifer meliloti) protein is GTPase Era.